The chain runs to 335 residues: DNA-directed RNA polymerase subunit alpha (335 aa).

The segment at 1–233 is alpha N-terminal domain (alpha-NTD); that stretch reads MMLNATEFLT…QQISIFVDLE (233 aa). Positions 247–335 are alpha C-terminal domain (alpha-CTD); sequence VDPVLLRPVD…VDDRFSYRSR (89 aa).

It belongs to the RNA polymerase alpha chain family. In terms of assembly, homodimer. The RNAP catalytic core consists of 2 alpha, 1 beta, 1 beta' and 1 omega subunit. When a sigma factor is associated with the core the holoenzyme is formed, which can initiate transcription.

It catalyses the reaction RNA(n) + a ribonucleoside 5'-triphosphate = RNA(n+1) + diphosphate. Its function is as follows. DNA-dependent RNA polymerase catalyzes the transcription of DNA into RNA using the four ribonucleoside triphosphates as substrates. The polypeptide is DNA-directed RNA polymerase subunit alpha (Psychrobacter arcticus (strain DSM 17307 / VKM B-2377 / 273-4)).